A 127-amino-acid chain; its full sequence is Large ribosomal subunit protein bL12 (127 aa).

Residues 93 to 127 form a disordered region; that stretch reads LVDEAPNPVSEGVSREEADDLKAQIEDAGGEVELQ. Positions 105–117 are enriched in basic and acidic residues; it reads VSREEADDLKAQI.

Belongs to the bacterial ribosomal protein bL12 family. Homodimer. Part of the ribosomal stalk of the 50S ribosomal subunit. Forms a multimeric L10(L12)X complex, where L10 forms an elongated spine to which 2 to 4 L12 dimers bind in a sequential fashion. Binds GTP-bound translation factors.

Forms part of the ribosomal stalk which helps the ribosome interact with GTP-bound translation factors. Is thus essential for accurate translation. In Salinibacter ruber (strain DSM 13855 / M31), this protein is Large ribosomal subunit protein bL12.